The primary structure comprises 380 residues: MSEDFYSVLGVSRDADEDEIKQAYRKKASEYHPDVSDDPNAEEKFKQVKKAKEVLLDDEKRRMYDQMGHERFQEAEKRGATDTDRGRGGMGGMGGGGMGGMNDIFEQFFGGGGRSQSRSGPRQGSDLKTRLKVDLEDAYHGVTKQLTVTRPEECPDCDGAGHPPDADSRTCSACDGRGQQTTVRQTALGRVQQTRECPQCDGKGTIYSETCSTCRGDGQVRNETTLQVEVPAGIRDGQTLRMDGEGAPGENGGRKGDLLVEIRIDDHETFERDGDDLRCRHPISFPQAVFGDTVEVPTLDGAVEMDVPAGTQSGETFRLRGKGMPRLKRRGHGDLYVQVRVVTPESLNEEQREALEAFAEAGGEEIDVEQGFFEKLKSSF.

The 65-residue stretch at 4 to 68 (DFYSVLGVSR…EKRRMYDQMG (65 aa)) folds into the J domain. Residues 27-87 (KASEYHPDVS…RGATDTDRGR (61 aa)) show a composition bias toward basic and acidic residues. A disordered region spans residues 27-126 (KASEYHPDVS…SRSGPRQGSD (100 aa)). Positions 88–100 (GGMGGMGGGGMGG) are enriched in gly residues. The span at 115-124 (SQSRSGPRQG) shows a compositional bias: low complexity. The CR-type zinc-finger motif lies at 141–223 (GVTKQLTVTR…CRGDGQVRNE (83 aa)). C154, C157, C171, C174, C197, C200, C211, and C214 together coordinate Zn(2+). 4 CXXCXGXG motif repeats span residues 154 to 161 (CPDCDGAG), 171 to 178 (CSACDGRG), 197 to 204 (CPQCDGKG), and 211 to 218 (CSTCRGDG).

It belongs to the DnaJ family. Homodimer. Zn(2+) serves as cofactor.

The protein localises to the cytoplasm. Functionally, participates actively in the response to hyperosmotic and heat shock by preventing the aggregation of stress-denatured proteins and by disaggregating proteins, also in an autonomous, DnaK-independent fashion. Unfolded proteins bind initially to DnaJ; upon interaction with the DnaJ-bound protein, DnaK hydrolyzes its bound ATP, resulting in the formation of a stable complex. GrpE releases ADP from DnaK; ATP binding to DnaK triggers the release of the substrate protein, thus completing the reaction cycle. Several rounds of ATP-dependent interactions between DnaJ, DnaK and GrpE are required for fully efficient folding. Also involved, together with DnaK and GrpE, in the DNA replication of plasmids through activation of initiation proteins. The protein is Chaperone protein DnaJ of Natronomonas pharaonis (strain ATCC 35678 / DSM 2160 / CIP 103997 / JCM 8858 / NBRC 14720 / NCIMB 2260 / Gabara) (Halobacterium pharaonis).